A 487-amino-acid polypeptide reads, in one-letter code: N-succinylglutamate 5-semialdehyde dehydrogenase (487 aa).

Residue 221-226 (GSSDTG) coordinates NAD(+). Catalysis depends on residues Glu244 and Cys278.

Belongs to the aldehyde dehydrogenase family. AstD subfamily.

It catalyses the reaction N-succinyl-L-glutamate 5-semialdehyde + NAD(+) + H2O = N-succinyl-L-glutamate + NADH + 2 H(+). It functions in the pathway amino-acid degradation; L-arginine degradation via AST pathway; L-glutamate and succinate from L-arginine: step 4/5. In terms of biological role, catalyzes the NAD-dependent reduction of succinylglutamate semialdehyde into succinylglutamate. This Burkholderia lata (strain ATCC 17760 / DSM 23089 / LMG 22485 / NCIMB 9086 / R18194 / 383) protein is N-succinylglutamate 5-semialdehyde dehydrogenase.